We begin with the raw amino-acid sequence, 757 residues long: Mitofusin-2 (757 aa).

Residues 1–604 (MSLLFSRCNS…TQEELMVSMV (604 aa)) lie on the Cytoplasmic side of the membrane. The segment at 30–94 (KHFVTAKKKI…VRGISEVLAR (65 aa)) is part of a helix bundle domain, formed by helices from N-terminal and C-terminal regions. The Dynamin-type G domain occupies 93 to 342 (ARRHMKVAFF…VRMFEFQNFE (250 aa)). The tract at residues 103–110 (GRTSNGKS) is G1 motif. Residue 106 to 111 (SNGKST) coordinates GTP. T111 bears the Phosphothreonine; by PINK1 mark. The G2 motif stretch occupies residues 129–130 (TT). Residues 199-202 (DSPG) are G3 motif. 258–261 (NRWD) is a GTP binding site. Residues 258–261 (NRWD) are G4 motif. Residue E288 is a region of interest, G5 motif. Positions 305 and 307 each coordinate GTP. The interval 359–385 (EQHTVRAKQIAEAVRLIMDSLHIAAQE) is part of a helix bundle domain, formed by helices from N-terminal and C-terminal regions. A coiled-coil region spans residues 406–435 (KQLELLAQDYKLRIKQMTEEVERQVSTAMA). Phosphoserine; by PINK1 is present on S442. A helical transmembrane segment spans residues 605 to 625 (TGLASLTSRTSMGILVVGGVV). A topological domain (mitochondrial intermembrane) is located at residue W626. Residues 627–647 (KAVGWRLIALSFGLYGLLYVY) form a helical membrane-spanning segment. The Cytoplasmic segment spans residues 648–757 (ERLTWTTRAK…FIHQYLQPSR (110 aa)). A coiled-coil region spans residues 696–738 (FAHLCQQVDITRDNLEQEIAAMNKKVEALDSLQSKAKLLRNKA). The segment at 722 to 753 (EALDSLQSKAKLLRNKAGWLDSELNMFIHQYL) is part of a helix bundle domain, formed by helices from N-terminal and C-terminal regions.

This sequence belongs to the TRAFAC class dynamin-like GTPase superfamily. Dynamin/Fzo/YdjA family. Mitofusin subfamily. Forms homomultimers and heteromultimers with MFN1. Oligomerization is essential for mitochondrion fusion. Interacts with VAT1. Interacts with STOML2; may form heterooligomers. Interacts (phosphorylated) with PRKN. Interacts with EIF2AK3. Interacts with THG1L; THG1L probably functions as a guanyl-nucleotide exchange factor/GEF, activating MFN2. Phosphorylated by PINK1. Post-translationally, ubiquitinated by non-degradative ubiquitin by PRKN, promoting mitochondrial fusion; deubiquitination by USP30 inhibits mitochondrial fusion. Ubiquitinated by HUWE1 when dietary stearate (C18:0) levels are low; ubiquitination inhibits mitochondrial fusion. In terms of tissue distribution, ubiquitous. In brain, it is more expressed than MFN1, while it is expressed at a weaker level than MFN1 in heart and testis. Expressed at high level in elongating spermatids of seminiferous tubules. Expression is markedly down-regulated in highly proliferative vascular smooth muscle cells (VSMCs) from the genetic hypertensive animal model SHR, as well as in balloon-injured Wistar Kyoto arteries.

It localises to the mitochondrion outer membrane. The catalysed reaction is GTP + H2O = GDP + phosphate + H(+). In terms of biological role, mitochondrial outer membrane GTPase that mediates mitochondrial clustering and fusion. Mitochondria are highly dynamic organelles, and their morphology is determined by the equilibrium between mitochondrial fusion and fission events. Overexpression induces the formation of mitochondrial networks. Membrane clustering requires GTPase activity and may involve a major rearrangement of the coiled coil domains. Plays a central role in mitochondrial metabolism and may be associated with obesity and/or apoptosis processes. Plays an important role in the regulation of vascular smooth muscle cell proliferation. Involved in the clearance of damaged mitochondria via selective autophagy (mitophagy). Is required for PRKN recruitment to dysfunctional mitochondria. Involved in the control of unfolded protein response (UPR) upon ER stress including activation of apoptosis and autophagy during ER stress. Acts as an upstream regulator of EIF2AK3 and suppresses EIF2AK3 activation under basal conditions. In Rattus norvegicus (Rat), this protein is Mitofusin-2 (Mfn2).